Consider the following 296-residue polypeptide: MTNKLTSFLADRKKTIENQLSVYTEKLDMPDSLKKSMLYSLQAGGKRLRPLIVLAVLNAYGKSEKDGIPVGCAVEMIHTYSLIHDDLPCMDDDDLRRGKPTNHKVFGEATAVLAGDGLLTESFKLITSHVSDEVSAEKRLRLVNELISAAGTEGMVGGQVADMEAENRQVTLEELESIHERKTAKLLGFCVIAGAILADAPEEDIETLRTFSSHIGIGFQIRDDILDLEGSEEKIGKRVGSDTTNDKSTYPSLLSLEGAKHKLDVHIKEAKRLIGGLSLQKDLLYELCDLIAARDH.

Residues K46, R49, and H78 each coordinate isopentenyl diphosphate. D85 and D91 together coordinate Mg(2+). R96 lines the (2E)-geranyl diphosphate pocket. Position 97 (R97) interacts with isopentenyl diphosphate. (2E)-geranyl diphosphate-binding residues include K182, T183, Q220, and K237.

It belongs to the FPP/GGPP synthase family. Mg(2+) serves as cofactor.

Its subcellular location is the cytoplasm. It catalyses the reaction isopentenyl diphosphate + (2E)-geranyl diphosphate = (2E,6E)-farnesyl diphosphate + diphosphate. The sequence is that of Farnesyl diphosphate synthase (ispA) from Bacillus subtilis (strain 168).